The sequence spans 454 residues: Putative serine carboxypeptidase-like 23 (454 aa).

A signal peptide spans 1–22 (MARIHLIIILLVISSTSSSSSS). 3 N-linked (GlcNAc...) asparagine glycosylation sites follow: Asn52, Asn102, and Asn136. Cystine bridges form between Cys85–Cys338, Cys247–Cys258, and Cys282–Cys306. Residue Ser178 is part of the active site. N-linked (GlcNAc...) asparagine glycosylation is found at Asn287 and Asn327. Active-site residues include Asp375 and His427.

It belongs to the peptidase S10 family. As to expression, expression not detected.

The protein resides in the secreted. In terms of biological role, probable carboxypeptidase. This chain is Putative serine carboxypeptidase-like 23 (SCPL23), found in Arabidopsis thaliana (Mouse-ear cress).